Here is a 148-residue protein sequence, read N- to C-terminus: Ribonuclease P protein component (148 aa).

The tract at residues 119–148 (PLPAAPGTMPPARAPRPSSLSPTEPDPRSD) is disordered.

This sequence belongs to the RnpA family. As to quaternary structure, consists of a catalytic RNA component (M1 or rnpB) and a protein subunit.

It carries out the reaction Endonucleolytic cleavage of RNA, removing 5'-extranucleotides from tRNA precursor.. RNaseP catalyzes the removal of the 5'-leader sequence from pre-tRNA to produce the mature 5'-terminus. It can also cleave other RNA substrates such as 4.5S RNA. The protein component plays an auxiliary but essential role in vivo by binding to the 5'-leader sequence and broadening the substrate specificity of the ribozyme. This is Ribonuclease P protein component from Xanthomonas campestris pv. campestris (strain 8004).